We begin with the raw amino-acid sequence, 70 residues long: Conotoxin Vc6.10 (70 aa).

A signal peptide spans 1–19; sequence MEKLTILLLVAAVLTSTQA. The propeptide occupies 20–40; it reads LIQGGADERQKAKINFLSRSD. 3 cysteine pairs are disulfide-bonded: Cys43–Cys57, Cys50–Cys62, and Cys56–Cys69.

This sequence belongs to the conotoxin O2 superfamily. Expressed by the venom duct.

It is found in the secreted. Inhibits voltage-gated ion channels. This Conus victoriae (Queen Victoria cone) protein is Conotoxin Vc6.10.